A 139-amino-acid chain; its full sequence is Nucleoside diphosphate kinase (139 aa).

ATP-binding residues include K10, F58, R86, T92, R104, and N114. The active-site Pros-phosphohistidine intermediate is H117.

This sequence belongs to the NDK family. Homotetramer. Mg(2+) is required as a cofactor.

It localises to the cytoplasm. The catalysed reaction is a 2'-deoxyribonucleoside 5'-diphosphate + ATP = a 2'-deoxyribonucleoside 5'-triphosphate + ADP. It catalyses the reaction a ribonucleoside 5'-diphosphate + ATP = a ribonucleoside 5'-triphosphate + ADP. Major role in the synthesis of nucleoside triphosphates other than ATP. The ATP gamma phosphate is transferred to the NDP beta phosphate via a ping-pong mechanism, using a phosphorylated active-site intermediate. The chain is Nucleoside diphosphate kinase from Rhodococcus erythropolis (strain PR4 / NBRC 100887).